The following is a 289-amino-acid chain: Iodotyrosine deiodinase 1 (289 aa).

Residues 1-21 (MYFLTPILVAILCILVVWIFK) form a helical membrane-spanning segment. Over residues 47-58 (DLKDSSDLHQAE) the composition is skewed to basic and acidic residues. Positions 47-69 (DLKDSSDLHQAEEDADEWQESEE) are disordered. A compositionally biased stretch (acidic residues) spans 59–69 (EDADEWQESEE). FMN is bound by residues 100 to 104 (RRSVR), S128, and 128 to 129 (SG). 4 residues coordinate 3,5-diiodo-L-tyrosine: A130, E157, Y161, and K182. Residues A130, E157, Y161, and K182 each contribute to the 3-iodo-L-tyrosine site. Residues 237–239 (TTT) and R279 each bind FMN.

Belongs to the nitroreductase family. Homodimer. The cofactor is FMN.

Its subcellular location is the cell membrane. It localises to the cytoplasmic vesicle membrane. It carries out the reaction 2 iodide + L-tyrosine + 2 NADP(+) = 3,5-diiodo-L-tyrosine + 2 NADPH + H(+). The enzyme catalyses iodide + L-tyrosine + NADP(+) = 3-iodo-L-tyrosine + NADPH. It catalyses the reaction 3-iodo-L-tyrosine + iodide + NADP(+) = 3,5-diiodo-L-tyrosine + NADPH + H(+). The catalysed reaction is L-tyrosine + chloride + NADP(+) = 3-chloro-L-tyrosine + NADPH. It carries out the reaction bromide + L-tyrosine + NADP(+) = 3-bromo-L-tyrosine + NADPH. Catalyzes the dehalogenation of halotyrosines such as 3-bromo-L-tyrosine, 3-chloro-L-tyrosine, 3-iodo-L-tyrosine and 3,5-diiodo-L-tyrosine. During thyroid hormone biosynthesis, facilitates iodide salvage by catalysing the oxidative NADPH-dependent deiodination of the halogenated by-products of thyroid hormone production, monoiodotyrosine (L-MIT) and diiodotyrosine (L-DIT). The scavanged iodide can then reenter the hormone-producing pathways. Acts more efficiently on 3-iodo-L-tyrosine than 3,5-diiodo-L-tyrosine. The sequence is that of Iodotyrosine deiodinase 1 (IYD) from Pongo abelii (Sumatran orangutan).